The following is a 559-amino-acid chain: Formate--tetrahydrofolate ligase (559 aa).

ATP is bound at residue 68–75 (TPAGEGKT).

Belongs to the formate--tetrahydrofolate ligase family.

It catalyses the reaction (6S)-5,6,7,8-tetrahydrofolate + formate + ATP = (6R)-10-formyltetrahydrofolate + ADP + phosphate. It participates in one-carbon metabolism; tetrahydrofolate interconversion. This is Formate--tetrahydrofolate ligase from Rhizobium johnstonii (strain DSM 114642 / LMG 32736 / 3841) (Rhizobium leguminosarum bv. viciae).